Reading from the N-terminus, the 268-residue chain is Tryptophan synthase alpha chain (268 aa).

Residues glutamate 49 and aspartate 60 each act as proton acceptor in the active site.

The protein belongs to the TrpA family. Tetramer of two alpha and two beta chains.

It catalyses the reaction (1S,2R)-1-C-(indol-3-yl)glycerol 3-phosphate + L-serine = D-glyceraldehyde 3-phosphate + L-tryptophan + H2O. It functions in the pathway amino-acid biosynthesis; L-tryptophan biosynthesis; L-tryptophan from chorismate: step 5/5. In terms of biological role, the alpha subunit is responsible for the aldol cleavage of indoleglycerol phosphate to indole and glyceraldehyde 3-phosphate. The chain is Tryptophan synthase alpha chain from Salmonella choleraesuis (strain SC-B67).